Consider the following 108-residue polypeptide: ATP synthase epsilon chain (108 aa).

This sequence belongs to the ATPase epsilon chain family. F-type ATPases have 2 components, CF(1) - the catalytic core - and CF(0) - the membrane proton channel. CF(1) has five subunits: alpha(3), beta(3), gamma(1), delta(1), epsilon(1). CF(0) has three main subunits: a, b and c.

It is found in the cell inner membrane. Produces ATP from ADP in the presence of a proton gradient across the membrane. The chain is ATP synthase epsilon chain from Rickettsia bellii (strain OSU 85-389).